Reading from the N-terminus, the 190-residue chain is RING finger protein 227 (190 aa).

The RING-type zinc-finger motif lies at Cys-18 to Arg-81. The disordered stretch occupies residues Ala-108–Gly-147. Acidic residues predominate over residues Glu-126–Ala-135.

The protein is RING finger protein 227 of Mus musculus (Mouse).